We begin with the raw amino-acid sequence, 221 residues long: Crossover junction endodeoxyribonuclease RuvC (221 aa).

Residues aspartate 12, glutamate 73, and aspartate 146 contribute to the active site. Mg(2+)-binding residues include aspartate 12, glutamate 73, and aspartate 146. Residues 169-221 (SQYSEQELEKRRRVQQGKLGKAKSTYNAEQAQSHASDPAKAAHPSQFQRTDTN) are disordered. The segment covering 192–203 (STYNAEQAQSHA) has biased composition (polar residues).

The protein belongs to the RuvC family. Homodimer which binds Holliday junction (HJ) DNA. The HJ becomes 2-fold symmetrical on binding to RuvC with unstacked arms; it has a different conformation from HJ DNA in complex with RuvA. In the full resolvosome a probable DNA-RuvA(4)-RuvB(12)-RuvC(2) complex forms which resolves the HJ. Mg(2+) is required as a cofactor.

The protein localises to the cytoplasm. It carries out the reaction Endonucleolytic cleavage at a junction such as a reciprocal single-stranded crossover between two homologous DNA duplexes (Holliday junction).. Its function is as follows. The RuvA-RuvB-RuvC complex processes Holliday junction (HJ) DNA during genetic recombination and DNA repair. Endonuclease that resolves HJ intermediates. Cleaves cruciform DNA by making single-stranded nicks across the HJ at symmetrical positions within the homologous arms, yielding a 5'-phosphate and a 3'-hydroxyl group; requires a central core of homology in the junction. The consensus cleavage sequence is 5'-(A/T)TT(C/G)-3'. Cleavage occurs on the 3'-side of the TT dinucleotide at the point of strand exchange. HJ branch migration catalyzed by RuvA-RuvB allows RuvC to scan DNA until it finds its consensus sequence, where it cleaves and resolves the cruciform DNA. This chain is Crossover junction endodeoxyribonuclease RuvC, found in Corynebacterium glutamicum (strain ATCC 13032 / DSM 20300 / JCM 1318 / BCRC 11384 / CCUG 27702 / LMG 3730 / NBRC 12168 / NCIMB 10025 / NRRL B-2784 / 534).